The primary structure comprises 410 residues: Peptidase T (410 aa).

Histidine 79 contacts Zn(2+). Residue aspartate 81 is part of the active site. Residue aspartate 142 coordinates Zn(2+). Residue glutamate 176 is the Proton acceptor of the active site. Zn(2+) is bound by residues glutamate 177, aspartate 199, and histidine 381.

It belongs to the peptidase M20B family. It depends on Zn(2+) as a cofactor.

It localises to the cytoplasm. The catalysed reaction is Release of the N-terminal residue from a tripeptide.. Functionally, cleaves the N-terminal amino acid of tripeptides. This is Peptidase T from Listeria welshimeri serovar 6b (strain ATCC 35897 / DSM 20650 / CCUG 15529 / CIP 8149 / NCTC 11857 / SLCC 5334 / V8).